Here is a 260-residue protein sequence, read N- to C-terminus: Malonyl-[acyl-carrier protein] O-methyltransferase (260 aa).

Belongs to the methyltransferase superfamily.

It carries out the reaction malonyl-[ACP] + S-adenosyl-L-methionine = malonyl-[ACP] methyl ester + S-adenosyl-L-homocysteine. Its pathway is cofactor biosynthesis; biotin biosynthesis. Its function is as follows. Converts the free carboxyl group of a malonyl-thioester to its methyl ester by transfer of a methyl group from S-adenosyl-L-methionine (SAM). It allows to synthesize pimeloyl-ACP via the fatty acid synthetic pathway. This chain is Malonyl-[acyl-carrier protein] O-methyltransferase, found in Haemophilus influenzae (strain ATCC 51907 / DSM 11121 / KW20 / Rd).